The chain runs to 134 residues: MRSVLTISVGLLFGLALSSVAHANDHKILGVIAMPRNETNDLTLKIPVCRIVKRIQLTADHGDIELSGASVYFKTARSASQSLNVPSSIKEGQTTGWININSDNDNKRCVSKITFSGHTVNSSDMARLKVIGDD.

Positions 1–23 (MRSVLTISVGLLFGLALSSVAHA) are cleaved as a signal peptide.

The protein belongs to the UPF0412 family.

The protein is UPF0412 protein YaaI of Salmonella typhimurium (strain LT2 / SGSC1412 / ATCC 700720).